A 652-amino-acid polypeptide reads, in one-letter code: MSEKIYPIPDNIKKNALIDEETYQQWYQESINDPESFWAKHGQCIEWFKPYTKVKNTSFNGDVSIQWYEDGITNVAYNCIDRHLKTHGDKIALIWEGDNPYHDKKITYNELYEHVCRFANILKNHGVKKGDKVTIYLTMIPEAAYAMLACARIGAIHSVIFAGFSPEAIAGRIVDCESTFIITANQGLRGGKQINLKDSVDHAIEIAARQNVHVDQVMVIRRTCGPIHWVEGRDFWYHEEVSHTKTDCPAEKMNAEDPLFILYTSGSTGKPKGVLHTTAGYLVYASMTHKYVFDYHAGEIYWCTADIGWITGHSYLVYGPLCNAATTLMFEGTPTFPDNGRFWEIVDKHQVNIFYTAPTAIRALMGAGNSFVERSKRTSLRLLGSVGEPINPEAWEWFYHTVGNNHCPILDTWWQTETGGHMITPLPGATPLKAGSATRPFFGVQLQIIDAEGNVLEGETEGNLCIIDSWPGQMRTLYNDHERFIQTYFSTYKGKYFTGDGCRRDSDGYYWITGRVDDILNVSGHRLGTAEIESALVSHPAVSEAAVVGYPHTIKGQGIYSFITLMEGTAPSEELHQELIRHVRKEIGSIAILDKVQFAPQLPKTRSGKIMRRILRKIAENNFDNLGDISTLSEPQVIDDLIANRQNREITA.

CoA-binding positions include Arg-189–Lys-192 and Thr-311. Residues Gly-387–Pro-389, Asp-411–Thr-416, Asp-500, and Arg-515 each bind ATP. CoA is bound at residue Ser-523. Arg-526 contacts ATP. Val-537, His-539, and Val-542 together coordinate Mg(2+). Arg-584 lines the CoA pocket. Lys-609 carries the post-translational modification N6-acetyllysine.

It belongs to the ATP-dependent AMP-binding enzyme family. Mg(2+) serves as cofactor. In terms of processing, acetylated. Deacetylation by the SIR2-homolog deacetylase activates the enzyme.

The catalysed reaction is acetate + ATP + CoA = acetyl-CoA + AMP + diphosphate. Catalyzes the conversion of acetate into acetyl-CoA (AcCoA), an essential intermediate at the junction of anabolic and catabolic pathways. AcsA undergoes a two-step reaction. In the first half reaction, AcsA combines acetate with ATP to form acetyl-adenylate (AcAMP) intermediate. In the second half reaction, it can then transfer the acetyl group from AcAMP to the sulfhydryl group of CoA, forming the product AcCoA. The protein is Acetyl-coenzyme A synthetase of Bartonella henselae (strain ATCC 49882 / DSM 28221 / CCUG 30454 / Houston 1) (Rochalimaea henselae).